We begin with the raw amino-acid sequence, 797 residues long: N-acetylneuraminate (7)9-O-acetyltransferase (797 aa).

The Cytoplasmic portion of the chain corresponds to 1–18 (MAALAYNLGKREINHYFS). A helical transmembrane segment spans residues 19-39 (VRSAKVLALVAVLLLAACHLA). The Lumenal segment spans residues 40 to 313 (SRRYRGNDSC…QPRPPVTLIQ (274 aa)). Asn46 carries N-linked (GlcNAc...) asparagine glycosylation. The active-site Acyl-ester intermediate is the Ser94. Asn175 and Asn187 each carry an N-linked (GlcNAc...) asparagine glycan. Catalysis depends on residues Asp270 and His273. Residues 314-334 (KLAACFFTLSIIGYLIFYIIH) form a helical membrane-spanning segment. The Cytoplasmic segment spans residues 335-363 (RNAHRKNKPCTDLESGEEKKNIINTPVSS). The chain crosses the membrane as a helical span at residues 364-384 (LEILLQSFCKLGLIMAYFYMC). Over 385–395 (DRANLFMKENK) the chain is Lumenal. Residues 396–416 (FYTHSSFFIPIIYILVLGVFY) traverse the membrane as a helical segment. The Cytoplasmic segment spans residues 417-439 (NENTKETKVLNREQTDEWKGWMQ). The chain crosses the membrane as a helical span at residues 440–460 (LVILIYHISGASTFLPVYMHI). Residue Arg461 is a topological domain, lumenal. The helical transmembrane segment at 462–482 (VLVAAYLFQTGYGHFSYFWIK) threads the bilayer. At 483–486 (GDFG) the chain is on the cytoplasmic side. A helical membrane pass occupies residues 487–507 (IYRVCQVLFRLNFLVVVLCIV). Residues 508-513 (MDRPYQ) lie on the Lumenal side of the membrane. The chain crosses the membrane as a helical span at residues 514 to 534 (FYYFVPLVTVWFMVIYVTLAL). Residues 535–547 (WPQIIQKKANGNC) lie on the Cytoplasmic side of the membrane. The helical transmembrane segment at 548–568 (FWHFGLLLKLGFLLLFICFLA) threads the bilayer. Over 569-605 (YSQGAFEKIFSLWPLSKCFELKGNVYEWWFRWRLDRY) the chain is Lumenal. The helical transmembrane segment at 606-626 (VVFHGMLFAFIYLALQKRQIL) threads the bilayer. Residues 627–638 (SEGKGEPLFSNK) lie on the Cytoplasmic side of the membrane. Residues 639–659 (ISNFLLFISVVSFLTYSIWAS) traverse the membrane as a helical segment. The Lumenal segment spans residues 660–671 (SCKNKAECNELH). The chain crosses the membrane as a helical span at residues 672-692 (PSVSVVQILAFILIRNIPGYA). Over 693 to 698 (RSVYSS) the chain is Cytoplasmic. A helical transmembrane segment spans residues 699 to 719 (FFAWFGKISLELFICQYHIWL). Topologically, residues 720 to 725 (AADTRG) are lumenal. The helical transmembrane segment at 726–746 (ILVLIPGNPMLNIIVSTFIFV) threads the bilayer. At 747 to 770 (CVAHEISQITNDLAQIIIPKDNSS) the chain is on the cytoplasmic side. The chain crosses the membrane as a helical span at residues 771 to 791 (LLKRLACIAAFFCGLLILSSI). Residues 792–797 (QDKSKH) are Lumenal-facing.

The protein belongs to the PC-esterase family. CASD1 subfamily. N-glycosylated. In terms of tissue distribution, highly expressed in peripheral B lymphocytes.

The protein resides in the golgi apparatus membrane. The catalysed reaction is CMP-N-acetyl-beta-neuraminate + acetyl-CoA = CMP-N-acetyl-9-O-acetyl-beta-neuraminate + CoA. The enzyme catalyses a ganglioside GD3 (d18:1(4E)) + acetyl-CoA = a ganglioside Ac-O-7-GD3(d18:1(4E)) + CoA. It catalyses the reaction CMP-N-acetyl-beta-neuraminate + acetyl-CoA = CMP-N-acetyl-7-O-acetyl-beta-neuraminate + CoA. Key enzyme in the biosynthesis of O-acetylated (O-Ac) sialoglycans such as gangliosides O-AcGD3 and O-AcGD2, which affect various processes such as cell-cell interactions, host-pathogen recognition. Catalyzes the transfer of an acetyl group from a donor, the acetyl-coenzyme-A molecule (acetyl-CoA), to the C7/8/9 OH-position of a sialic acid residue. The primary site of O-acetyl group transfer on sialic acid seems to depend on cell type and can be C7, from which the O-acetyl group could subsequently migrate to the C8 and then to the C9 position, or at C9 with possibility of migrating to the C8 and then to the C7 position. Together with ST8SIA1 (GD3 synthase) it increases the levels of ganglioside Ac-O-7-GD3. Can transfer the acetyl group from acetyl-CoA to free sialate (N-acetylneuraminate, Neu5Ac) in vitro, but has preferred substrate specificity for CMP-activated sialate (CMP-Neu5Ac), resulting in the formation of 9-O-acetylated CMP-Neu5Ac (CMP-Neu5,9Ac2). CMP-Neu5,9Ac2 may be used by sialyltransferases as a sialate donor for glycoconjugate acceptors such as ganglioside GD3. O-acetylation at position C9 of ganglioside GD3 can counteract the pro-apoptotic effects of the ganglioside GD3 in tumor cells. The sequence is that of N-acetylneuraminate (7)9-O-acetyltransferase from Homo sapiens (Human).